The following is a 396-amino-acid chain: Elongation factor Tu 1 (396 aa).

The tr-type G domain occupies 10-206; that stretch reads KPHVNVGTIG…ALDTYIPTPK (197 aa). The G1 stretch occupies residues 19-26; it reads GHVDHGKT. 19–26 contributes to the GTP binding site; sequence GHVDHGKT. T26 lines the Mg(2+) pocket. Residues 60 to 64 form a G2 region; the sequence is GITIS. Residues 81–84 form a G3 region; the sequence is DCPG. GTP contacts are provided by residues 81-85 and 136-139; these read DCPGH and NKAD. Residues 136–139 are G4; the sequence is NKAD. The G5 stretch occupies residues 174-176; it reads SAL.

This sequence belongs to the TRAFAC class translation factor GTPase superfamily. Classic translation factor GTPase family. EF-Tu/EF-1A subfamily. Monomer.

The protein resides in the cytoplasm. The enzyme catalyses GTP + H2O = GDP + phosphate + H(+). GTP hydrolase that promotes the GTP-dependent binding of aminoacyl-tRNA to the A-site of ribosomes during protein biosynthesis. This is Elongation factor Tu 1 from Ruthia magnifica subsp. Calyptogena magnifica.